Here is a 459-residue protein sequence, read N- to C-terminus: Ribulose bisphosphate carboxylase large chain (459 aa).

Lys-4 carries the post-translational modification N6,N6,N6-trimethyllysine. Asn-113 and Thr-163 together coordinate substrate. Lys-165 acts as the Proton acceptor in catalysis. Lys-167 lines the substrate pocket. Mg(2+)-binding residues include Lys-191, Asp-193, and Glu-194. An N6-carboxylysine modification is found at Lys-191. The active-site Proton acceptor is the His-284. Positions 285, 317, and 369 each coordinate substrate.

Belongs to the RuBisCO large chain family. Type I subfamily. As to quaternary structure, heterohexadecamer of 8 large chains and 8 small chains; disulfide-linked. The disulfide link is formed within the large subunit homodimers. Mg(2+) serves as cofactor. Post-translationally, the disulfide bond which can form in the large chain dimeric partners within the hexadecamer appears to be associated with oxidative stress and protein turnover.

The protein localises to the plastid. Its subcellular location is the chloroplast. It catalyses the reaction 2 (2R)-3-phosphoglycerate + 2 H(+) = D-ribulose 1,5-bisphosphate + CO2 + H2O. It carries out the reaction D-ribulose 1,5-bisphosphate + O2 = 2-phosphoglycolate + (2R)-3-phosphoglycerate + 2 H(+). In terms of biological role, ruBisCO catalyzes two reactions: the carboxylation of D-ribulose 1,5-bisphosphate, the primary event in carbon dioxide fixation, as well as the oxidative fragmentation of the pentose substrate in the photorespiration process. Both reactions occur simultaneously and in competition at the same active site. In Cephalotus follicularis (Albany pitcher plant), this protein is Ribulose bisphosphate carboxylase large chain.